The following is a 166-amino-acid chain: NAD(P)H-quinone oxidoreductase subunit I, chloroplastic (166 aa).

2 4Fe-4S ferredoxin-type domains span residues 55–84 (GRIH…VDWK) and 95–124 (LNYS…MTEE). [4Fe-4S] cluster is bound by residues Cys64, Cys67, Cys70, Cys74, Cys104, Cys107, Cys110, and Cys114.

The protein belongs to the complex I 23 kDa subunit family. NDH is composed of at least 16 different subunits, 5 of which are encoded in the nucleus. The cofactor is [4Fe-4S] cluster.

The protein resides in the plastid. It is found in the chloroplast thylakoid membrane. It carries out the reaction a plastoquinone + NADH + (n+1) H(+)(in) = a plastoquinol + NAD(+) + n H(+)(out). The catalysed reaction is a plastoquinone + NADPH + (n+1) H(+)(in) = a plastoquinol + NADP(+) + n H(+)(out). Functionally, NDH shuttles electrons from NAD(P)H:plastoquinone, via FMN and iron-sulfur (Fe-S) centers, to quinones in the photosynthetic chain and possibly in a chloroplast respiratory chain. The immediate electron acceptor for the enzyme in this species is believed to be plastoquinone. Couples the redox reaction to proton translocation, and thus conserves the redox energy in a proton gradient. The sequence is that of NAD(P)H-quinone oxidoreductase subunit I, chloroplastic from Calea megacephala.